A 251-amino-acid chain; its full sequence is Hydroxyacylglutathione hydrolase (251 aa).

Residues H53, H55, D57, H58, H110, D127, and H165 each contribute to the Zn(2+) site.

It belongs to the metallo-beta-lactamase superfamily. Glyoxalase II family. As to quaternary structure, monomer. It depends on Zn(2+) as a cofactor.

It catalyses the reaction an S-(2-hydroxyacyl)glutathione + H2O = a 2-hydroxy carboxylate + glutathione + H(+). It functions in the pathway secondary metabolite metabolism; methylglyoxal degradation; (R)-lactate from methylglyoxal: step 2/2. Functionally, thiolesterase that catalyzes the hydrolysis of S-D-lactoyl-glutathione to form glutathione and D-lactic acid. The protein is Hydroxyacylglutathione hydrolase of Escherichia coli (strain SMS-3-5 / SECEC).